We begin with the raw amino-acid sequence, 567 residues long: Allo-aromadendrene synthase TPS4FN (567 aa).

Residues arginine 282, aspartate 319, aspartate 323, arginine 462, and aspartate 465 each contribute to the (2E,6E)-farnesyl diphosphate site. Aspartate 319 and aspartate 323 together coordinate Mg(2+). A DDXXD motif motif is present at residues 319 to 323 (DDIYD). Residues aspartate 465 and glutamate 473 each contribute to the Mg(2+) site.

The protein belongs to the terpene synthase family. Tpsb subfamily. Mg(2+) serves as cofactor. Mn(2+) is required as a cofactor.

It catalyses the reaction (2E,6E)-farnesyl diphosphate = alpha-humulene + diphosphate. The enzyme catalyses (2E,6E)-farnesyl diphosphate = (+)-valencene + diphosphate. It carries out the reaction (2E)-geranyl diphosphate = beta-myrcene + diphosphate. The catalysed reaction is (2E,6E)-farnesyl diphosphate = allo-aromadendrene + diphosphate. It catalyses the reaction (2E,6E)-farnesyl diphosphate + H2O = palustrol + diphosphate. Its pathway is secondary metabolite biosynthesis; terpenoid biosynthesis. In terms of biological role, involved in sesquiterpene olefins biosynthesis, constituants of cannabinoids and terpenoids-rich resins. Catalyzes mainly the conversion of (2E)-farnesyl diphosphate to allo-aromadendrene, and also produces minor products such as alpha-humulene, valencene and palustrol. Can also use (2E)-geranyl diphosphate as substrate with low efficiency, producing minor amounts of myrcene. The sequence is that of Allo-aromadendrene synthase TPS4FN from Cannabis sativa (Hemp).